The following is a 127-amino-acid chain: DNA-directed RNA polymerases I, II, and III subunit RPABC2 (127 aa).

A compositionally biased stretch (acidic residues) spans 1–32 (MSDNEDNFDGDDFDDVEEDEGLDDLENAEEEG). Positions 1–52 (MSDNEDNFDGDDFDDVEEDEGLDDLENAEEEGQVNVEILPSGERPQANQKRI) are disordered. Ser-2 is subject to N-acetylserine. Residue Ser-2 is modified to Phosphoserine; by CK2.

Belongs to the archaeal Rpo6/eukaryotic RPB6 RNA polymerase subunit family. In terms of assembly, component of the RNA polymerase I (Pol I), RNA polymerase II (Pol II) and RNA polymerase III (Pol III) complexes consisting of at least 13, 12 and 17 subunits, respectively. Pol I complex consists of a ten-subunit catalytic core composed of POLR1A/RPA1, POLR1B/RPA2, POLR1C/RPAC1, POLR1D/RPAC2, POLR1H/RPA12, POLR2E/RPABC1, POLR2F/RPABC2, POLR2H/RPABC3, POLR2K/RPABC4 and POLR2L/RPABC5; a mobile stalk subunit POLR1F/RPA43 protruding from the core and additional subunits homologous to general transcription factors POLR1E/RPA49 and POLR1G/RPA34. Part of Pol I pre-initiation complex (PIC), in which Pol I core assembles with RRN3 and promoter-bound UTBF and SL1/TIF-IB complex. Pol II complex contains a ten-subunit catalytic core composed of POLR2A/RPB1, POLR2B/RPB2, POLR2C/RPB3, POLR2I/RPB9, POLR2J/RPB11, POLR2E/RPABC1, POLR2F/RPABC2, POLR2H/RPABC3, POLR2K/RPABC4 and POLR2L/RPABC5 and a mobile stalk composed of two subunits POLR2D/RPB4 and POLR2G/RPB7. Part of Pol II(G) complex, in which Pol II core associates with an additional subunit POLR2M; unlike conventional Pol II, Pol II(G) functions as a transcriptional repressor. Part of TBP-based Pol II pre-initiation complex (PIC), in which Pol II core assembles with general transcription factors and other specific initiation factors including GTF2E1, GTF2E2, GTF2F1, GTF2F2, TCEA1, ERCC2, ERCC3, GTF2H2, GTF2H3, GTF2H4, GTF2H5, GTF2A1, GTF2A2, GTF2B and TBP; this large multi-subunit PIC complex mediates DNA unwinding and targets Pol II core to the transcription start site where the first phosphodiester bond forms. Pol III complex consists of a ten-subunit catalytic core composed of POLR3A/RPC1, POLR3B/RPC2, POLR1C/RPAC1, POLR1D/RPAC2, POLR3K/RPC10, POLR2E/RPABC1, POLR2F/RPABC2, POLR2H/RPABC3, POLR2K/RPABC4 and POLR2L/RPABC5; a mobile stalk composed of two subunits POLR3H/RPC8 and CRCP/RPC9, protruding from the core and functioning primarily in transcription initiation; and additional subunits homologous to general transcription factors of the RNA polymerase II machinery, POLR3C/RPC3-POLR3F/RPC6-POLR3G/RPC7 heterotrimer required for transcription initiation and POLR3D/RPC4-POLR3E/RPC5 heterodimer involved in both transcription initiation and termination.

It is found in the nucleus. It localises to the nucleolus. DNA-dependent RNA polymerase catalyzes the transcription of DNA into RNA using the four ribonucleoside triphosphates as substrates. Common component of RNA polymerases I, II, and III which synthesize ribosomal RNA precursors, mRNA precursors and many functional non-coding RNAs, and small RNAs, such as 5S rRNA and tRNAs, respectively. Pol II is the central component of the basal RNA polymerase II transcription machinery. Pols are composed of mobile elements that move relative to each other. In Pol II, POLR2F/RPABC2 is part of the clamp element and together with parts of POLR2A/RPB1 and POLR2B/RPB2 forms a pocket to which the POLR2D/RPB4-POLR2G/RPB7 subcomplex binds. This Bos taurus (Bovine) protein is DNA-directed RNA polymerases I, II, and III subunit RPABC2 (POLR2F).